The chain runs to 320 residues: Glucokinase (320 aa).

Belongs to the ROK (NagC/XylR) family. In terms of assembly, monomer. Requires a divalent metal cation as cofactor.

The catalysed reaction is D-glucose + ATP = D-glucose 6-phosphate + ADP + H(+). Catalyzes the phosphorylation of D-glucose to D-glucose 6-phosphate using ATP as the phosphate donor. ITP can also serve as an effective phosphoryl donor. According to Hansen et al., the enzyme has a broad hexose specificity, and in addition to glucose, which shows the highest catalytic efficiency, it can also phosphorylate fructose, mannose, glucosamine, N-acetylglucosamine, N-acetylmannosamine and 2-deoxyglucose. However, according to Sakuraba et al., the enzyme shows strict specificity for D-glucose. The chain is Glucokinase from Aeropyrum pernix (strain ATCC 700893 / DSM 11879 / JCM 9820 / NBRC 100138 / K1).